Consider the following 543-residue polypeptide: Chaperonin GroEL (543 aa).

ATP contacts are provided by residues 30 to 33 (TLGP), Lys-51, 87 to 91 (DGTTT), Gly-415, and Asp-496.

The protein belongs to the chaperonin (HSP60) family. In terms of assembly, forms a cylinder of 14 subunits composed of two heptameric rings stacked back-to-back. Interacts with the co-chaperonin GroES.

It is found in the cytoplasm. It carries out the reaction ATP + H2O + a folded polypeptide = ADP + phosphate + an unfolded polypeptide.. Together with its co-chaperonin GroES, plays an essential role in assisting protein folding. The GroEL-GroES system forms a nano-cage that allows encapsulation of the non-native substrate proteins and provides a physical environment optimized to promote and accelerate protein folding. The chain is Chaperonin GroEL from Gluconobacter oxydans (strain 621H) (Gluconobacter suboxydans).